A 136-amino-acid polypeptide reads, in one-letter code: Ig kappa chain V-V region MOPC 21 (136 aa).

A signal peptide spans 1–29 (MHQTSMGIKMESHTLVFISILLCLYGADG). The segment at 30-52 (NIVMTQSPKSMSMSVGERVTLTC) is framework-1. The tract at residues 53 to 63 (KASENVVTYVS) is complementarity-determining-1. The tract at residues 64–78 (WYQQKPEQSPKLLIY) is framework-2. The interval 79-85 (GASNRYT) is complementarity-determining-2. The tract at residues 86–117 (GVPDRFTGSGSATDFTLTISSVQAEDLADYHC) is framework-3. Residues 118–126 (GQGYSYPYT) are complementarity-determining-3. A framework-4 region spans residues 127–136 (FGGGTKLEIK).

This chain is Ig kappa chain V-V region MOPC 21, found in Mus musculus (Mouse).